The chain runs to 245 residues: tRNA (guanine-N(1)-)-methyltransferase (245 aa).

S-adenosyl-L-methionine-binding positions include Gly114 and 133–138; that span reads LGDFVI.

This sequence belongs to the RNA methyltransferase TrmD family. In terms of assembly, homodimer.

It localises to the cytoplasm. The enzyme catalyses guanosine(37) in tRNA + S-adenosyl-L-methionine = N(1)-methylguanosine(37) in tRNA + S-adenosyl-L-homocysteine + H(+). In terms of biological role, specifically methylates guanosine-37 in various tRNAs. In Pediococcus pentosaceus (strain ATCC 25745 / CCUG 21536 / LMG 10740 / 183-1w), this protein is tRNA (guanine-N(1)-)-methyltransferase.